Consider the following 402-residue polypeptide: Alanine racemase (402 aa).

Residue K34 is the Proton acceptor; specific for D-alanine of the active site. An N6-(pyridoxal phosphate)lysine modification is found at K34. Substrate is bound at residue R133. The RPE1 insert domain occupies E226–R271. Residue Y296 is the Proton acceptor; specific for L-alanine of the active site. A substrate-binding site is contributed by M344.

The protein belongs to the alanine racemase family. The cofactor is pyridoxal 5'-phosphate.

The catalysed reaction is L-alanine = D-alanine. It participates in amino-acid biosynthesis; D-alanine biosynthesis; D-alanine from L-alanine: step 1/1. In terms of biological role, catalyzes the interconversion of L-alanine and D-alanine. May also act on other amino acids. The sequence is that of Alanine racemase (alr) from Rickettsia typhi (strain ATCC VR-144 / Wilmington).